The following is a 127-amino-acid chain: Protein ApaG (127 aa).

The region spanning 3–127 (NERKYSIKVE…FILSVPRVLH (125 aa)) is the ApaG domain.

The chain is Protein ApaG from Nitrosomonas europaea (strain ATCC 19718 / CIP 103999 / KCTC 2705 / NBRC 14298).